The primary structure comprises 131 residues: Translation initiation factor 5A (131 aa).

K36 is modified (hypusine).

It belongs to the eIF-5A family.

The protein localises to the cytoplasm. Functions by promoting the formation of the first peptide bond. The protein is Translation initiation factor 5A (eIF5A) of Saccharolobus islandicus (strain Y.N.15.51 / Yellowstone #2) (Sulfolobus islandicus).